We begin with the raw amino-acid sequence, 169 residues long: MATLTEDDVLEQLDAQDNLFSFMKTAHTILLQGIRQFLPSLFVDNDEEIVEYAVKPLLAQSGPLDDIDVALRLIYALGKMDKWLYADITHFSQFWHYLNEQDETPGFADDMTWDFISNVNSITRNAMLYDALKAMKFADFSVWSEARFSGMVKTALTLAVTTTLKELTP.

This sequence belongs to the MtlR/FumE family.

It catalyses the reaction (S)-malate = fumarate + H2O. In terms of biological role, in vitro catalyzes the addition of water to fumarate, forming malate. Cannot catalyze the reverse reaction. Cannot use the cis-isomer maleate as substrate. The sequence is that of Fumarase E from Escherichia coli (strain K12).